The sequence spans 234 residues: Enterobactin synthase component D (234 aa).

Positions 107, 109, and 152 each coordinate Mg(2+).

It belongs to the P-Pant transferase superfamily. EntD family. As to quaternary structure, entB, EntD, EntE, and EntF form a multienzyme complex called enterobactin synthase. Requires Mg(2+) as cofactor.

It is found in the membrane. It carries out the reaction apo-[aryl-carrier protein] + CoA = holo-[aryl-carrier protein] + adenosine 3',5'-bisphosphate + H(+). The catalysed reaction is apo-[peptidyl-carrier protein] + CoA = holo-[peptidyl-carrier protein] + adenosine 3',5'-bisphosphate + H(+). It participates in siderophore biosynthesis; enterobactin biosynthesis. Involved in the biosynthesis of the siderophore enterobactin (enterochelin), which is a macrocyclic trimeric lactone of N-(2,3-dihydroxybenzoyl)-serine. The serine trilactone serves as a scaffolding for the three catechol functionalities that provide hexadentate coordination for the tightly ligated iron(2+) atoms. Plays an essential role in the assembly of the enterobactin by catalyzing the transfer of the 4'-phosphopantetheine (Ppant) moiety from coenzyme A to the apo-domains of both EntB (ArCP domain) and EntF (PCP domain) to yield their holo-forms which make them competent for the activation of 2,3-dihydroxybenzoate (DHB) and L-serine, respectively. The polypeptide is Enterobactin synthase component D (Salmonella typhimurium (strain LT2 / SGSC1412 / ATCC 700720)).